Here is a 142-residue protein sequence, read N- to C-terminus: Hemoglobin subunit alpha-1 (142 aa).

Ser1 carries the post-translational modification N-acetylserine. Residues 1-142 (SLSVKDKAAV…VALALAERYR (142 aa)) form the Globin domain. O2 is bound at residue His59. A heme b-binding site is contributed by His88.

Belongs to the globin family. As to quaternary structure, hb 1 is a heterotetramer of two alpha-1 and two beta-1 chains. Red blood cells.

Its function is as follows. Involved in oxygen transport from gills to the various peripheral tissues. This Gobionotothen gibberifrons (Humped rockcod) protein is Hemoglobin subunit alpha-1 (hba1).